The primary structure comprises 95 residues: Progonadoliberin-1 (95 aa).

Residues 1-23 form the signal peptide; the sequence is MAPQTSNLWLLLVVMMVMSQGCC. At Gln24 the chain carries Pyrrolidone carboxylic acid. Gly33 bears the Glycine amide mark.

This sequence belongs to the GnRH family.

It is found in the secreted. Functionally, stimulates the secretion of gonadotropins. In Pagrus major (Red sea bream), this protein is Progonadoliberin-1 (gnrh1).